Here is a 181-residue protein sequence, read N- to C-terminus: ATP-dependent protease subunit HslV (181 aa).

The active site involves Thr9. Na(+) is bound by residues Ser166, Cys169, and Thr172.

The protein belongs to the peptidase T1B family. HslV subfamily. As to quaternary structure, a double ring-shaped homohexamer of HslV is capped on each side by a ring-shaped HslU homohexamer. The assembly of the HslU/HslV complex is dependent on binding of ATP.

The protein resides in the cytoplasm. The enzyme catalyses ATP-dependent cleavage of peptide bonds with broad specificity.. With respect to regulation, allosterically activated by HslU binding. Its function is as follows. Protease subunit of a proteasome-like degradation complex believed to be a general protein degrading machinery. The sequence is that of ATP-dependent protease subunit HslV from Staphylococcus haemolyticus (strain JCSC1435).